The following is a 501-amino-acid chain: Orsellinic acid/F9775 biosynthesis cluster protein D (501 aa).

The interval 137-189 is disordered; sequence EVTPTTEDEDDEENESENDEEEGDVDLEEQEDDNGGRQSTTVTTSPGPSAPSV. A compositionally biased stretch (acidic residues) spans 142–169; the sequence is TEDEDDEENESENDEEEGDVDLEEQEDD. A compositionally biased stretch (polar residues) spans 172–183; sequence GRQSTTVTTSPG.

Part of the gene cluster that mediates the biosynthesis of orsellinic acid, as well as of the cathepsin K inhibitors F9775 A and F9775 B. The non-reducing polyketide synthase orsA produces orsellinic acid by condensing acetyl-CoA with 3 malonyl-CoA units. Further modifications by the decarboxylase orsB and the tyrosinase-like protein orsC lead to the production of F9775 A and F9775 B. The functions of orsD and orsE remain unclear since only orsB and orsC are required to convert orsellinic acid into F9775 A and F9775 B. This chain is Orsellinic acid/F9775 biosynthesis cluster protein D, found in Emericella nidulans (strain FGSC A4 / ATCC 38163 / CBS 112.46 / NRRL 194 / M139) (Aspergillus nidulans).